We begin with the raw amino-acid sequence, 163 residues long: Cyclic pyranopterin monophosphate synthase (163 aa).

Residues 79–81 and 118–119 contribute to the substrate site; these read LCH and ME. The active site involves D133.

The protein belongs to the MoaC family. Homohexamer; trimer of dimers.

It catalyses the reaction (8S)-3',8-cyclo-7,8-dihydroguanosine 5'-triphosphate = cyclic pyranopterin phosphate + diphosphate. Its pathway is cofactor biosynthesis; molybdopterin biosynthesis. Its function is as follows. Catalyzes the conversion of (8S)-3',8-cyclo-7,8-dihydroguanosine 5'-triphosphate to cyclic pyranopterin monophosphate (cPMP). This chain is Cyclic pyranopterin monophosphate synthase, found in Nocardioides sp. (strain ATCC BAA-499 / JS614).